An 83-amino-acid chain; its full sequence is uncharacterized protein (83 aa).

The protein resides in the plastid. It localises to the chloroplast. This is an uncharacterized protein from Pinus thunbergii (Japanese black pine).